The primary structure comprises 586 residues: Dynein axonemal assembly factor 3 (586 aa).

The segment at 455–493 is disordered; that stretch reads PGGGDSAVESGPAPSKVESTRAPLPESISPPQANQAPSL.

Belongs to the DNAAF3 family.

It is found in the cytoplasm. Its subcellular location is the dynein axonemal particle. In terms of biological role, required for the assembly of axonemal inner and outer dynein arms. Involved in preassembly of dyneins into complexes before their transport into cilia. This is Dynein axonemal assembly factor 3 (Dnaaf3) from Mus musculus (Mouse).